The sequence spans 164 residues: Putative 4-hydroxy-4-methyl-2-oxoglutarate aldolase (164 aa).

Substrate contacts are provided by residues 75 to 78 (GDLI) and Arg-97. A divalent metal cation is bound at residue Asp-98.

Belongs to the class II aldolase/RraA-like family. Homotrimer. A divalent metal cation serves as cofactor.

The enzyme catalyses 4-hydroxy-4-methyl-2-oxoglutarate = 2 pyruvate. It catalyses the reaction oxaloacetate + H(+) = pyruvate + CO2. Catalyzes the aldol cleavage of 4-hydroxy-4-methyl-2-oxoglutarate (HMG) into 2 molecules of pyruvate. Also contains a secondary oxaloacetate (OAA) decarboxylase activity due to the common pyruvate enolate transition state formed following C-C bond cleavage in the retro-aldol and decarboxylation reactions. The sequence is that of Putative 4-hydroxy-4-methyl-2-oxoglutarate aldolase from Shewanella oneidensis (strain ATCC 700550 / JCM 31522 / CIP 106686 / LMG 19005 / NCIMB 14063 / MR-1).